The sequence spans 267 residues: Interleukin-15 receptor subunit alpha (267 aa).

An N-terminal signal peptide occupies residues 1-30 (MAPRRARGCRTLGLPALLLLLLLRPPATRG). The Sushi domain occupies 31-95 (ITCPPPMSVE…WTTPSLKCIR (65 aa)). The Extracellular portion of the chain corresponds to 31–205 (ITCPPPMSVE…VYPQGHSDTT (175 aa)). Disulfide bonds link Cys33/Cys75 and Cys59/Cys93. The interval 102–178 (QRPAPPSTVT…ESSHGTPSQT (77 aa)) is disordered. The span at 108–124 (STVTTAGVTPQPESLSP) shows a compositional bias: polar residues. Low complexity predominate over residues 129–145 (PAASSPSSNNTAATTAA). N-linked (GlcNAc...) asparagine glycosylation is present at Asn137. Polar residues predominate over residues 152–165 (LMPSKSPSTGTTEI). A helical membrane pass occupies residues 206 to 228 (VAISTSTVLLCGLSAVSLLACYL). Residues 229–267 (KSRQTPPLASVEMEAMEALPVTWGTSSRDEDLENCSHHL) are Cytoplasmic-facing.

As to quaternary structure, the interleukin-15 receptor IL15R is a heterotrimer of IL15RA, IL2RB and IL2RG. IL15RA also self-associates. Interacts with SYK. N-glycosylated and O-glycosylated. Post-translationally, a soluble form (sIL-15RA) arises from proteolytic shedding of the membrane-anchored receptor. It also binds IL-15 and thus interferes with IL-15 binding to the membrane receptor. In terms of tissue distribution, expressed in neutrophils (at protein level). Expressed in fetal brain with higher expression in the hippocampus and cerebellum than in cortex and thalamus. Higher levels of soluble sIL-15RA form in comparison with membrane-bound forms is present in all brain structures. Isoforms 1, 3, 4, 5, 6, 7, 8 and 9: Widely expressed.

It is found in the membrane. The protein resides in the nucleus membrane. Its subcellular location is the cell surface. It localises to the endoplasmic reticulum membrane. The protein localises to the golgi apparatus membrane. It is found in the cytoplasmic vesicle membrane. The protein resides in the secreted. Its subcellular location is the extracellular space. Functionally, high-affinity receptor for interleukin-15. Can signal both in cis and trans where IL15R from one subset of cells presents IL15 to neighboring IL2RG-expressing cells. In neutrophils, binds and activates kinase SYK in response to IL15 stimulation. In neutrophils, required for IL15-induced phagocytosis in a SYK-dependent manner. Expression of different isoforms may alter or interfere with signal transduction. In terms of biological role, does not bind IL15. This is Interleukin-15 receptor subunit alpha (IL15RA) from Homo sapiens (Human).